The following is a 295-amino-acid chain: Fatty acyl-CoA reductase (295 aa).

An NADP(+)-binding site is contributed by Thr-21 to Gly-28. Ser-153 lines the substrate pocket. Tyr-166 serves as the catalytic Proton acceptor.

This sequence belongs to the short-chain dehydrogenases/reductases (SDR) family.

The catalysed reaction is hexadecanal + NADP(+) + CoA = hexadecanoyl-CoA + NADPH + H(+). Catalyzes the NADPH-dependent reduction of long chain acyl-CoA (with chain lengths of 14 to 22 carbons) to the corresponding aldehyde. This Acinetobacter baylyi (strain ATCC 33305 / BD413 / ADP1) protein is Fatty acyl-CoA reductase (acr1).